We begin with the raw amino-acid sequence, 619 residues long: Dihydroxy-acid dehydratase (619 aa).

Residue aspartate 81 participates in Mg(2+) binding. Cysteine 122 serves as a coordination point for [2Fe-2S] cluster. Aspartate 123 and lysine 124 together coordinate Mg(2+). At lysine 124 the chain carries N6-carboxylysine. Residue cysteine 195 participates in [2Fe-2S] cluster binding. Residue glutamate 492 coordinates Mg(2+). The active-site Proton acceptor is serine 518.

It belongs to the IlvD/Edd family. Homodimer. Requires [2Fe-2S] cluster as cofactor. It depends on Mg(2+) as a cofactor.

The enzyme catalyses (2R)-2,3-dihydroxy-3-methylbutanoate = 3-methyl-2-oxobutanoate + H2O. It catalyses the reaction (2R,3R)-2,3-dihydroxy-3-methylpentanoate = (S)-3-methyl-2-oxopentanoate + H2O. Its pathway is amino-acid biosynthesis; L-isoleucine biosynthesis; L-isoleucine from 2-oxobutanoate: step 3/4. The protein operates within amino-acid biosynthesis; L-valine biosynthesis; L-valine from pyruvate: step 3/4. In terms of biological role, functions in the biosynthesis of branched-chain amino acids. Catalyzes the dehydration of (2R,3R)-2,3-dihydroxy-3-methylpentanoate (2,3-dihydroxy-3-methylvalerate) into 2-oxo-3-methylpentanoate (2-oxo-3-methylvalerate) and of (2R)-2,3-dihydroxy-3-methylbutanoate (2,3-dihydroxyisovalerate) into 2-oxo-3-methylbutanoate (2-oxoisovalerate), the penultimate precursor to L-isoleucine and L-valine, respectively. The protein is Dihydroxy-acid dehydratase of Synechococcus elongatus (strain ATCC 33912 / PCC 7942 / FACHB-805) (Anacystis nidulans R2).